We begin with the raw amino-acid sequence, 345 residues long: Phosphoribosylformylglycinamidine cyclo-ligase (345 aa).

The protein belongs to the AIR synthase family.

Its subcellular location is the cytoplasm. It catalyses the reaction 2-formamido-N(1)-(5-O-phospho-beta-D-ribosyl)acetamidine + ATP = 5-amino-1-(5-phospho-beta-D-ribosyl)imidazole + ADP + phosphate + H(+). It participates in purine metabolism; IMP biosynthesis via de novo pathway; 5-amino-1-(5-phospho-D-ribosyl)imidazole from N(2)-formyl-N(1)-(5-phospho-D-ribosyl)glycinamide: step 2/2. This Escherichia coli O45:K1 (strain S88 / ExPEC) protein is Phosphoribosylformylglycinamidine cyclo-ligase.